Here is a 119-residue protein sequence, read N- to C-terminus: Large ribosomal subunit protein uL18 (119 aa).

This sequence belongs to the universal ribosomal protein uL18 family. In terms of assembly, part of the 50S ribosomal subunit; part of the 5S rRNA/L5/L18/L25 subcomplex. Contacts the 5S and 23S rRNAs.

This is one of the proteins that bind and probably mediate the attachment of the 5S RNA into the large ribosomal subunit, where it forms part of the central protuberance. The chain is Large ribosomal subunit protein uL18 from Staphylococcus aureus (strain bovine RF122 / ET3-1).